The sequence spans 317 residues: Orange carotenoid-binding protein (317 aa).

The 152-residue stretch at Ala-18–Gly-169 folds into the OCP N-terminal domain. Echinenone-binding positions include Glu-34–Ala-38, Leu-37–Tyr-44, Thr-80–Met-83, Leu-107–Met-117, Ile-125–Tyr-129, Ile-151–Met-161, Tyr-201, Cys-245–Leu-250, Val-273–Met-284, and Trp-288.

It belongs to the orange carotenoid-binding protein family. Monomer. Interacts with the APC core of the phycobilisome (PB), probably at a ratio of 1:1 in a light-independent manner; possibly only OCP-R binds to PBs. Interacts with FRP. Detachment from PBs is accelerated by FPR. The cofactor is 3'-hydroxyechinenone. In terms of processing, proteolytically cleaved into a red 16.7 kDa form named red carotenoid-binding protein (RCP) which lacks 15 residues from the N-terminus and approximately 150 residues from the C-terminus.

The protein localises to the cellular thylakoid membrane. Acts as a blue-light photoreceptor and photo-protectant. Essential for inhibiting damaged induced by excess blue-green light via a process known as non-photochemical quenching (NPQ). In the dark or dim light the stable inactive form (OCP-O) is orange, upon illumination with blue-green light it converts to a metastable active red form (OCP-R), inducing energy dissipation, quenching cellular fluorescence via NPQ. One OCP-R molecule is sufficient to quench 1 phycobilisome. More OCP-R accumulates under high-light and low temperature; in the dark OCP-R spontaneously reverts to OCP-O. Reversion of OCP-O is accelerated by FRP. A kinetic study suggests conversion of OCP-O to OCP-R is limited by cis-trans proline isomerization of either Gln224-Pro225 or Pro225-Pro226. This Synechocystis sp. (strain ATCC 27184 / PCC 6803 / Kazusa) protein is Orange carotenoid-binding protein.